Reading from the N-terminus, the 232-residue chain is Orotidine 5'-phosphate decarboxylase (232 aa).

Substrate contacts are provided by residues aspartate 12, lysine 34, 61–70 (DMKLLDIDNT), threonine 116, arginine 177, glutamine 186, glycine 206, and arginine 207. Lysine 63 (proton donor) is an active-site residue.

It belongs to the OMP decarboxylase family. Type 1 subfamily. Homodimer.

It carries out the reaction orotidine 5'-phosphate + H(+) = UMP + CO2. It functions in the pathway pyrimidine metabolism; UMP biosynthesis via de novo pathway; UMP from orotate: step 2/2. Catalyzes the decarboxylation of orotidine 5'-monophosphate (OMP) to uridine 5'-monophosphate (UMP). This chain is Orotidine 5'-phosphate decarboxylase, found in Sinorhizobium medicae (strain WSM419) (Ensifer medicae).